The sequence spans 68 residues: DNA-directed RNA polymerase subunit omega (68 aa).

The protein belongs to the RNA polymerase subunit omega family. The RNAP catalytic core consists of 2 alpha, 1 beta, 1 beta' and 1 omega subunit. When a sigma factor is associated with the core the holoenzyme is formed, which can initiate transcription.

It carries out the reaction RNA(n) + a ribonucleoside 5'-triphosphate = RNA(n+1) + diphosphate. Functionally, promotes RNA polymerase assembly. Latches the N- and C-terminal regions of the beta' subunit thereby facilitating its interaction with the beta and alpha subunits. The protein is DNA-directed RNA polymerase subunit omega of Ruminiclostridium cellulolyticum (strain ATCC 35319 / DSM 5812 / JCM 6584 / H10) (Clostridium cellulolyticum).